Consider the following 179-residue polypeptide: tRNA (cytidine(56)-2'-O)-methyltransferase (179 aa).

Residues leucine 82, 112 to 116, and 130 to 137 contribute to the S-adenosyl-L-methionine site; these read GAEKV and VGNQPHSE.

Belongs to the aTrm56 family. Homodimer.

It localises to the cytoplasm. It carries out the reaction cytidine(56) in tRNA + S-adenosyl-L-methionine = 2'-O-methylcytidine(56) in tRNA + S-adenosyl-L-homocysteine + H(+). In terms of biological role, specifically catalyzes the AdoMet-dependent 2'-O-ribose methylation of cytidine at position 56 in tRNAs. This Methanococcus maripaludis (strain C6 / ATCC BAA-1332) protein is tRNA (cytidine(56)-2'-O)-methyltransferase.